The sequence spans 224 residues: tRNA (guanine-N(7)-)-methyltransferase (224 aa).

3 residues coordinate S-adenosyl-L-methionine: Glu52, Asp77, and Asp126. Asp126 is a catalytic residue. Residues Lys130 and Asp162 each contribute to the substrate site.

The protein belongs to the class I-like SAM-binding methyltransferase superfamily. TrmB family.

It carries out the reaction guanosine(46) in tRNA + S-adenosyl-L-methionine = N(7)-methylguanosine(46) in tRNA + S-adenosyl-L-homocysteine. The protein operates within tRNA modification; N(7)-methylguanine-tRNA biosynthesis. Functionally, catalyzes the formation of N(7)-methylguanine at position 46 (m7G46) in tRNA. The polypeptide is tRNA (guanine-N(7)-)-methyltransferase (Christiangramia forsetii (strain DSM 17595 / CGMCC 1.15422 / KT0803) (Gramella forsetii)).